Reading from the N-terminus, the 212-residue chain is Pyridoxine/pyridoxamine 5'-phosphate oxidase (212 aa).

FMN-binding positions include 61–66, 76–77, Lys83, and Gln105; these read RSVLLK and YT. Lys66 lines the substrate pocket. 3 residues coordinate substrate: Tyr123, Arg127, and Ser131. FMN-binding positions include 140–141 and Trp185; that span reads QS. 191–193 provides a ligand contact to substrate; sequence RLH. Arg195 lines the FMN pocket.

Belongs to the pyridoxamine 5'-phosphate oxidase family. As to quaternary structure, homodimer. FMN is required as a cofactor.

It catalyses the reaction pyridoxamine 5'-phosphate + O2 + H2O = pyridoxal 5'-phosphate + H2O2 + NH4(+). The catalysed reaction is pyridoxine 5'-phosphate + O2 = pyridoxal 5'-phosphate + H2O2. The protein operates within cofactor metabolism; pyridoxal 5'-phosphate salvage; pyridoxal 5'-phosphate from pyridoxamine 5'-phosphate: step 1/1. Its pathway is cofactor metabolism; pyridoxal 5'-phosphate salvage; pyridoxal 5'-phosphate from pyridoxine 5'-phosphate: step 1/1. Catalyzes the oxidation of either pyridoxine 5'-phosphate (PNP) or pyridoxamine 5'-phosphate (PMP) into pyridoxal 5'-phosphate (PLP). The chain is Pyridoxine/pyridoxamine 5'-phosphate oxidase from Dichelobacter nodosus (strain VCS1703A).